Here is a 1295-residue protein sequence, read N- to C-terminus: MMEILRGSPALSAFRINKLLARFQAARLPVHNIYAEYVHFADLNAPLNDDEHAQLERLLKYGPALASHAPQGKLLLVTPRPGTISPWSSKATDIAHNCGLQQVNRLERGVAYYIEAGTLTNEQWQQVTAELHDRMMETVFFALDDAEQLFAHHQPTPVTSVDLLGQGRQALIDANLRLGLALAEDEIDYLQDAFTKLGRNPNDIELYMFAQANSEHCRHKIFNADWIIDGEQQPKSLFKMIKNTFETTPDHVLSAYKDNAAVMEGSEVGRYFADHETGRYDFHQEPAHILMKVETHNHPTAISPWPGAATGSGGEIRDEGATGRGAKPKAGLVGFSVSNLRIPGFEQPWEEDFGKPERIVTALDIMTEGPLGGAAFNNEFGRPALNGYFRTYEEKVNSHNGEELRGYHKPIMLAGGIGNIRADHVQKGEINVGAKLVVLGGPAMNIGLGGGAASSMASGQSDADLDFASVQRDNPEMERRCQEVIDRCWQLGDANPILFIHDVGAGGLSNAMPELVSDGGRGGKFELRDILSDEPGMSPLEIWCNESQERYVLAVAADQLPLFDELCKRERAPYAVIGEATEELHLSLHDRHFDNQPIDLPLDVLLGKTPKMTRDVQTLKAKGDALVREGITIADAVKRVLHLPTVAEKTFLVTIGDRSVTGMVARDQMVGPWQVPVANCAVTTASLDSYYGEAMAIGERAPVALLDFAASARLAVGEALTNIAATQIGDIKRIKLSANWMAAAGHPGEDAGLYEAVKAVGEELCPALGLTIPVGKDSMSMKTRWQEGNEEREMTSPLSLVISAFARVEDVRHTITPQLSTEDNTLLLIDLGKGNNALGATALAQVYRQLGDKPADVRDVAQLKGFYDAIQALVAQRKLLAYHDRSDGGLLVTLAEMAFAGHCGINADIASLGDDRLAALFNEELGAVIQVRAADREAVESVLAQHGLADCVHYVGQAVSGDRFVITANGQTVFSESRTTLRVWWAETTWQMQRLRDNPECADQEHQAKSNDADPGLNVKLSFDINEDVAAPYIATGARPKVAVLREQGVNSHVEMAAAFHRAGFDAIDVHMSDLLTGRTGLEDFHALVACGGFSYGDVLGAGEGWAKSILFNDRVRDEFATFFHRPQTLALGVCNGCQMMSNLRELIPGSELWPRFVRNTSDRFEARFSLVEVTQSPSLLLQGMVGSQMPIAVSHGEGRVEVRDAAHLAALESKGLVALRYVDNFGKVTETYPANPNGSPNGITAVTTESGRVTIMMPHPERVFRTVSNSWHPENWGEDGPWMRIFRNARKQLG.

The disordered stretch occupies residues 305–327 (WPGAATGSGGEIRDEGATGRGAK). ATP-binding positions include 307-318 (GAATGSGGEIRD) and A678. Residues E718, N722, and D884 each contribute to the Mg(2+) site. Residue S886 participates in ATP binding. Residues 1042–1295 (VAVLREQGVN…IFRNARKQLG (254 aa)) form the Glutamine amidotransferase type-1 domain. C1135 (nucleophile) is an active-site residue. Residues H1260 and E1262 contribute to the active site.

This sequence in the N-terminal section; belongs to the FGAMS family. As to quaternary structure, monomer.

The protein localises to the cytoplasm. It catalyses the reaction N(2)-formyl-N(1)-(5-phospho-beta-D-ribosyl)glycinamide + L-glutamine + ATP + H2O = 2-formamido-N(1)-(5-O-phospho-beta-D-ribosyl)acetamidine + L-glutamate + ADP + phosphate + H(+). It participates in purine metabolism; IMP biosynthesis via de novo pathway; 5-amino-1-(5-phospho-D-ribosyl)imidazole from N(2)-formyl-N(1)-(5-phospho-D-ribosyl)glycinamide: step 1/2. Phosphoribosylformylglycinamidine synthase involved in the purines biosynthetic pathway. Catalyzes the ATP-dependent conversion of formylglycinamide ribonucleotide (FGAR) and glutamine to yield formylglycinamidine ribonucleotide (FGAM) and glutamate. This is Phosphoribosylformylglycinamidine synthase from Shigella sonnei (strain Ss046).